A 158-amino-acid polypeptide reads, in one-letter code: Ribosome-binding factor A (158 aa).

Residues R127–D158 form a disordered region. Residues G134–A143 are compositionally biased toward basic and acidic residues.

This sequence belongs to the RbfA family. In terms of assembly, monomer. Binds 30S ribosomal subunits, but not 50S ribosomal subunits or 70S ribosomes.

The protein localises to the cytoplasm. In terms of biological role, one of several proteins that assist in the late maturation steps of the functional core of the 30S ribosomal subunit. Associates with free 30S ribosomal subunits (but not with 30S subunits that are part of 70S ribosomes or polysomes). Required for efficient processing of 16S rRNA. May interact with the 5'-terminal helix region of 16S rRNA. In Mycobacteroides abscessus (strain ATCC 19977 / DSM 44196 / CCUG 20993 / CIP 104536 / JCM 13569 / NCTC 13031 / TMC 1543 / L948) (Mycobacterium abscessus), this protein is Ribosome-binding factor A.